A 468-amino-acid polypeptide reads, in one-letter code: MPDVPWIEKYRPRKLSEIVNQEQALEKVRAWIESWLHGNPPKKKALLLAGPPGSGKTTTVYALAHEYNFEVIELNASDERTYNKIARYVQAAYTMDIMGKRRKIIFLDEADNIEPSGAPEIAKLIDKARNPIIMAANHYWEVPKEIRDRAELVEYKRLNQRDVISALVRILKREGITVPKEILTEIAKRSSGDLRAAINDLQTIVAGGYEDAKYVLAYRDVEKTVFQSLGMVFSSDNAKRAKLALMNLDMSPDEFLLWVDENIPHMYLKPEEMARAYEAISRADIYLGRAQRTGNYSLWKYAIDMMTAGVAVAGTKKKGFAKFYPPNTLKMLAESKEERSIRDSIIKKIMKEMHMSKLEALETMKILRTIFENNLDLAAHFTVFLELTEKEVEFLAGKEKAGTIWGKTLSIRRRIKETEKIEEKAVEEKVEEEEAEEEEEEERKEEEKPKAEKKKGKQVTLFDFIKKN.

An ATP-binding site is contributed by 50–57 (GPPGSGKT). The tract at residues 422 to 456 (EEKAVEEKVEEEEAEEEEEEERKEEEKPKAEKKKG) is disordered. Residues 429–444 (KVEEEEAEEEEEEERK) show a composition bias toward acidic residues.

The protein belongs to the activator 1 small subunits family. RfcL subfamily. As to quaternary structure, heteromultimer composed of small subunits (RfcS) and large subunits (RfcL).

Functionally, part of the RFC clamp loader complex which loads the PCNA sliding clamp onto DNA. The sequence is that of Replication factor C large subunit from Pyrococcus horikoshii (strain ATCC 700860 / DSM 12428 / JCM 9974 / NBRC 100139 / OT-3).